The chain runs to 203 residues: ATP-dependent Clp protease proteolytic subunit (203 aa).

S103 acts as the Nucleophile in catalysis. H128 is an active-site residue.

The protein belongs to the peptidase S14 family. Fourteen ClpP subunits assemble into 2 heptameric rings which stack back to back to give a disk-like structure with a central cavity, resembling the structure of eukaryotic proteasomes.

Its subcellular location is the cytoplasm. The enzyme catalyses Hydrolysis of proteins to small peptides in the presence of ATP and magnesium. alpha-casein is the usual test substrate. In the absence of ATP, only oligopeptides shorter than five residues are hydrolyzed (such as succinyl-Leu-Tyr-|-NHMec, and Leu-Tyr-Leu-|-Tyr-Trp, in which cleavage of the -Tyr-|-Leu- and -Tyr-|-Trp bonds also occurs).. Cleaves peptides in various proteins in a process that requires ATP hydrolysis. Has a chymotrypsin-like activity. Plays a major role in the degradation of misfolded proteins. The sequence is that of ATP-dependent Clp protease proteolytic subunit from Dichelobacter nodosus (strain VCS1703A).